Reading from the N-terminus, the 102-residue chain is Thioredoxin (102 aa).

One can recognise a Thioredoxin domain in the interval 1 to 102; it reads MVQIVSQDNF…SLVKLISKHQ (102 aa). A disulfide bridge links cysteine 28 with cysteine 31.

Belongs to the thioredoxin family.

Participates in various redox reactions through the reversible oxidation of its active center dithiol to a disulfide and catalyzes dithiol-disulfide exchange reactions. In Chlamydia muridarum (strain MoPn / Nigg), this protein is Thioredoxin (trxA).